The primary structure comprises 546 residues: U3 small nucleolar RNA-associated protein 18 homolog (546 aa).

Disordered stretches follow at residues 1–55, 94–118, and 177–205; these read MSLS…LEES, SAVRQIPDYEDDGDDDEELSDEENG, and NPGTDWARPDSQIVDGESSDDDDTQDGGV. Positions 13-23 are enriched in basic and acidic residues; the sequence is IKREELKKQYE. The segment covering 24-35 has biased composition (acidic residues); the sequence is DVEDEEEIGSDD. Residue serine 33 is modified to Phosphoserine. Positions 45 to 55 are enriched in basic and acidic residues; sequence TEKEKQKLEES. 2 stretches are compositionally biased toward acidic residues: residues 101 to 117 and 193 to 205; these read DYEDDGDDDEELSDEEN and ESSDDDDTQDGGV. WD repeat units lie at residues 242-281, 372-411, 413-454, and 509-545; these read PSNGPINSVHFHQNAQLLLTAGLDRRLRFFQIDGKRNTKI, KMNGSVRSLAFSEDGKHLLSSGGDGQVYVWDLRTMKCLYK, VDEG…GGKR, and STMHYPRCLDFSPGSGFMAMGNAAGKVLLYKLHHYQN. The short motif at 389-404 is the DWD box element; the sequence is LLSSGGDGQVYVWDLR.

This sequence belongs to the WD repeat UTP18 family.

The protein resides in the nucleus. It localises to the nucleolus. Involved in nucleolar processing of pre-18S ribosomal RNA. This Arabidopsis thaliana (Mouse-ear cress) protein is U3 small nucleolar RNA-associated protein 18 homolog.